Reading from the N-terminus, the 762-residue chain is 5-methyltetrahydropteroyltriglutamate--homocysteine methyltransferase (762 aa).

Residues 17–20 (REWK) and lysine 111 each bind 5-methyltetrahydropteroyltri-L-glutamate. L-homocysteine contacts are provided by residues 435–437 (IGS) and glutamate 488. Residues 435–437 (IGS) and glutamate 488 contribute to the L-methionine site. 5-methyltetrahydropteroyltri-L-glutamate is bound by residues 519-520 (RC) and tryptophan 565. Aspartate 603 is a binding site for L-homocysteine. Residue aspartate 603 coordinates L-methionine. Glutamate 609 contributes to the 5-methyltetrahydropteroyltri-L-glutamate binding site. Zn(2+) is bound by residues histidine 645, cysteine 647, and glutamate 669. The active-site Proton donor is the histidine 698. Cysteine 730 lines the Zn(2+) pocket.

This sequence belongs to the vitamin-B12 independent methionine synthase family. Zn(2+) serves as cofactor.

It carries out the reaction 5-methyltetrahydropteroyltri-L-glutamate + L-homocysteine = tetrahydropteroyltri-L-glutamate + L-methionine. The protein operates within amino-acid biosynthesis; L-methionine biosynthesis via de novo pathway; L-methionine from L-homocysteine (MetE route): step 1/1. In terms of biological role, catalyzes the transfer of a methyl group from 5-methyltetrahydrofolate to homocysteine resulting in methionine formation. The protein is 5-methyltetrahydropteroyltriglutamate--homocysteine methyltransferase of Bacillus thuringiensis (strain Al Hakam).